A 418-amino-acid polypeptide reads, in one-letter code: MFRRLLIATVVGILAAFAVAGFRHAMLLLEWLFLNNDSGSLVNAATNLSPWRRLLTPALGGLAAGLLLMGWQKFTQQRPHAPTDYMEALQTDGQFDYAASLVKSLASLLVVTSGSAIGREGAMILLAALAASCFAQRFTPRQEWKLWIACGAAAGMAAAYRAPLAGSLFIAEVLFGTMMLASLGPVIISAVVALLVSNLINHSDALLYNVQLSVTVQARDYALIISTGVLAGLCGPLLLTLMNACHRGFVSLKLAPPCQLALGGLIVGLLSLFTPAVWGNGYSTVQSFLTAPPLLMIIAGIFLCKLCAVLASSGSGAPGGVFTPTLFIGLAIGMLYGRSLGLWFPDGEEITLLLGLTGMATLLAATTHAPIMSTLMICEMTGEYQLLPGLLIACVIASVISRTLHRDSIYRQHTAQHS.

Helical transmembrane passes span 5–25 (LLIA…FRHA), 54–74 (LLTP…WQKF), 146–166 (LWIA…PLAG), 168–188 (LFIA…PVII), 222–242 (ALII…LTLM), 260–280 (LALG…VWGN), 291–311 (APPL…AVLA), 316–336 (GAPG…GMLY), 352–372 (LLLG…APIM), and 380–400 (MTGE…ASVI).

It belongs to the chloride channel (TC 2.A.49) family. ClcB subfamily.

It is found in the cell inner membrane. In terms of biological role, probably acts as an electrical shunt for an outwardly-directed proton pump that is linked to amino acid decarboxylation, as part of the extreme acid resistance (XAR) response. This is Voltage-gated ClC-type chloride channel ClcB from Escherichia coli O9:H4 (strain HS).